Consider the following 488-residue polypeptide: Argininosuccinate lyase (488 aa).

This sequence belongs to the lyase 1 family. Argininosuccinate lyase subfamily.

It localises to the cytoplasm. The catalysed reaction is 2-(N(omega)-L-arginino)succinate = fumarate + L-arginine. Its pathway is amino-acid biosynthesis; L-arginine biosynthesis; L-arginine from L-ornithine and carbamoyl phosphate: step 3/3. In Corynebacterium jeikeium (strain K411), this protein is Argininosuccinate lyase.